Consider the following 226-residue polypeptide: 6-carboxyhexanoate--CoA ligase (226 aa).

Belongs to the BioW family. As to quaternary structure, homodimer. Mg(2+) is required as a cofactor.

The enzyme catalyses heptanedioate + ATP + CoA = 6-carboxyhexanoyl-CoA + AMP + diphosphate. Its pathway is metabolic intermediate metabolism; pimeloyl-CoA biosynthesis; pimeloyl-CoA from pimelate: step 1/1. Functionally, catalyzes the transformation of pimelate into pimeloyl-CoA with concomitant hydrolysis of ATP to AMP. The chain is 6-carboxyhexanoate--CoA ligase from Methanocaldococcus infernus (strain DSM 11812 / JCM 15783 / ME).